Consider the following 339-residue polypeptide: Very-long-chain 3-oxoacyl-CoA reductase (339 aa).

The chain crosses the membrane as a helical span at residues 19 to 39 (VALFLLSIGGLFTACKLFSFC). Residues Leu64, Lys105, Asp119, Asp127, Asn146, Tyr213, Lys217, Val246, and Ser248 each contribute to the NADP(+) site. Catalysis depends on Tyr213, which acts as the Proton donor. Lys217 serves as the catalytic Lowers pKa of active site Tyr.

This sequence belongs to the short-chain dehydrogenases/reductases (SDR) family.

It localises to the endoplasmic reticulum membrane. It carries out the reaction a very-long-chain (3R)-3-hydroxyacyl-CoA + NADP(+) = a very-long-chain 3-oxoacyl-CoA + NADPH + H(+). It participates in lipid metabolism; fatty acid biosynthesis. Its function is as follows. Component of the microsomal membrane bound fatty acid elongation system, which produces the 26-carbon very long-chain fatty acids (VLCFA) from palmitate. Catalyzes the reduction of the 3-ketoacyl-CoA intermediate that is formed in each cycle of fatty acid elongation. VLCFAs serve as precursors for ceramide and sphingolipids. This Ajellomyces capsulatus (strain NAm1 / WU24) (Darling's disease fungus) protein is Very-long-chain 3-oxoacyl-CoA reductase.